Consider the following 248-residue polypeptide: MKRLKGLLVLALGFTGLQVFGQQNPDIKIEKLKDNLYVYTTYNTFKGTKYAANAVYMVTDKGVVVIDSPWGEDKFKSFTDEIYKKHGKKVIMNIATHSHDDRAGGLEYFGKLGAKTYSTKMTDSILAKENKPRAKYTFDNNKSFKVGNTEFQVYYPGKGHTADNVVVWFPKDKVLVGGCIVKSGDSKDLGFIGEAYVNDWTQSIHNIQQKFPDVQYVVAGHDDWKDQTSIQHTLDLISEYQQKQKASN.

The N-terminal stretch at 1 to 21 (MKRLKGLLVLALGFTGLQVFG) is a signal peptide. Zn(2+) contacts are provided by histidine 97, histidine 99, aspartate 101, histidine 160, and cysteine 179. Lysine 182 contacts substrate. Histidine 221 provides a ligand contact to Zn(2+).

Belongs to the metallo-beta-lactamase superfamily. Class-B beta-lactamase family. Monomer. Zn(2+) is required as a cofactor.

The protein localises to the periplasm. It carries out the reaction a beta-lactam + H2O = a substituted beta-amino acid. Its function is as follows. Confers resistance to the different beta-lactams antibiotics (penicillin, cephalosporin and carbapenem) via the hydrolysis of the beta-lactam ring. The chain is Metallo-beta-lactamase type 2 (blaB6) from Elizabethkingia meningoseptica (Chryseobacterium meningosepticum).